We begin with the raw amino-acid sequence, 263 residues long: 4-hydroxy-2-oxo-heptane-1,7-dioate aldolase (263 aa).

His-45 acts as the Proton acceptor in catalysis. Gln-147 contacts substrate. Glu-149 provides a ligand contact to a divalent metal cation. Substrate-binding residues include Ala-174 and Asp-175. Asp-175 is a binding site for a divalent metal cation.

Belongs to the HpcH/HpaI aldolase family. Homohexamer; trimer of dimers. The cofactor is a divalent metal cation.

The catalysed reaction is 4-hydroxy-2-oxoheptanedioate = succinate semialdehyde + pyruvate. It functions in the pathway aromatic compound metabolism; 4-hydroxyphenylacetate degradation; pyruvate and succinate semialdehyde from 4-hydroxyphenylacetate: step 7/7. Its function is as follows. Catalyzes the reversible retro-aldol cleavage of 4-hydroxy-2-ketoheptane-1,7-dioate (HKHD) to pyruvate and succinic semialdehyde. This chain is 4-hydroxy-2-oxo-heptane-1,7-dioate aldolase, found in Salmonella dublin (strain CT_02021853).